We begin with the raw amino-acid sequence, 199 residues long: Superoxide dismutase [Mn/Fe] (199 aa).

Fe(3+)-binding residues include His27, His81, Asp161, and His165. 4 residues coordinate Mn(2+): His27, His81, Asp161, and His165.

It belongs to the iron/manganese superoxide dismutase family. As to quaternary structure, homodimer. Mn(2+) is required as a cofactor. The cofactor is Fe(3+).

It carries out the reaction 2 superoxide + 2 H(+) = H2O2 + O2. Destroys superoxide anion radicals which are normally produced within the cells and which are toxic to biological systems. Catalyzes the dismutation of superoxide anion radicals into O2 and H2O2 by successive reduction and oxidation of the transition metal ion at the active site. This is Superoxide dismutase [Mn/Fe] (sodA) from Staphylococcus haemolyticus (strain JCSC1435).